The following is a 154-amino-acid chain: Prefoldin subunit alpha (154 aa).

The tract at residues 123 to 154 (EAEQLEQQAQQAQQQMMQQQMQAQQQPQDGEQ) is disordered. Low complexity predominate over residues 127 to 154 (LEQQAQQAQQQMMQQQMQAQQQPQDGEQ).

The protein belongs to the prefoldin alpha subunit family. Heterohexamer of two alpha and four beta subunits.

The protein localises to the cytoplasm. Its function is as follows. Molecular chaperone capable of stabilizing a range of proteins. Seems to fulfill an ATP-independent, HSP70-like function in archaeal de novo protein folding. The chain is Prefoldin subunit alpha from Halobacterium salinarum (strain ATCC 29341 / DSM 671 / R1).